Here is a 182-residue protein sequence, read N- to C-terminus: ATP-dependent protease subunit HslV (182 aa).

Thr-6 is an active-site residue. Residues Ala-164, Cys-167, and Thr-170 each coordinate Na(+).

Belongs to the peptidase T1B family. HslV subfamily. A double ring-shaped homohexamer of HslV is capped on each side by a ring-shaped HslU homohexamer. The assembly of the HslU/HslV complex is dependent on binding of ATP.

It localises to the cytoplasm. The enzyme catalyses ATP-dependent cleavage of peptide bonds with broad specificity.. With respect to regulation, allosterically activated by HslU binding. Functionally, protease subunit of a proteasome-like degradation complex believed to be a general protein degrading machinery. The protein is ATP-dependent protease subunit HslV of Borrelia garinii subsp. bavariensis (strain ATCC BAA-2496 / DSM 23469 / PBi) (Borreliella bavariensis).